A 274-amino-acid chain; its full sequence is Small ribosomal subunit biogenesis GTPase RsgA (274 aa).

One can recognise a CP-type G domain in the interval 58-215; sequence KNYLNRPKVA…LVDSPGFSIY (158 aa). Residues 108 to 111 and 158 to 166 each bind GTP; these read SKLD and GHSGVGKST. Residues Cys238, Cys243, His245, and Cys252 each contribute to the Zn(2+) site.

The protein belongs to the TRAFAC class YlqF/YawG GTPase family. RsgA subfamily. In terms of assembly, monomer. Associates with 30S ribosomal subunit, binds 16S rRNA. The cofactor is Zn(2+).

It is found in the cytoplasm. One of several proteins that assist in the late maturation steps of the functional core of the 30S ribosomal subunit. Helps release RbfA from mature subunits. May play a role in the assembly of ribosomal proteins into the subunit. Circularly permuted GTPase that catalyzes slow GTP hydrolysis, GTPase activity is stimulated by the 30S ribosomal subunit. The polypeptide is Small ribosomal subunit biogenesis GTPase RsgA (Mycoplasmoides gallisepticum (strain R(low / passage 15 / clone 2)) (Mycoplasma gallisepticum)).